The sequence spans 490 residues: E3 ubiquitin-protein ligase Hakai (490 aa).

Positions 34–60 are disordered; the sequence is QANKAKPAPRTQRTINRMPAKAPPGDE. The RING-type zinc finger occupies 108–148; it reads CDKCGLPIKIYGRMIPCKHVFCYDCAILHEKKGDKMCPGCS. Positions 147–205 are HYB domain; sequence CSDPVQRIEQCTRGSLFMCSIVQGCKRTYLSQRDLQAHINHRHMRAGKPVTRASLENVH. Residues 163–189 form a C2H2-type zinc finger; sequence FMCSIVQGCKRTYLSQRDLQAHINHRH. 3 positions are modified to phosphoserine: S200, S284, and S289. The interval 254-490 is disordered; that stretch reads QPHEDIRAPP…DQTRYRPYYQ (237 aa). Pro residues-rich tracts occupy residues 341 to 358, 371 to 388, and 398 to 422; these read APPP…PHPP, APPP…PPPG, and MNHP…PPHH. Positions 426-441 are enriched in polar residues; the sequence is NSLPQFTEDQGTLSPP. Positions 456–477 are enriched in pro residues; sequence PRGPPPPPRLQGPPSQTPLPGP.

The protein belongs to the Hakai family. As to quaternary structure, homodimer. Interacts with tyrosine-phosphorylated SRC substrates. Component of the WMM complex, a N6-methyltransferase complex composed of a catalytic subcomplex, named MAC, and of an associated subcomplex, named MACOM. The MAC subcomplex is composed of METTL3 and METTL14. The MACOM subcomplex is composed of WTAP, ZC3H13, CBLL1/HAKAI, VIRMA, and, in some cases of RBM15 (RBM15 or RBM15B). Also a component of a MACOM-like complex, named WTAP complex, composed of WTAP, ZC3H13, CBLL1, VIRMA, RBM15, BCLAF1 and THRAP3. Post-translationally, phosphorylated on tyrosine residues.

It is found in the nucleus speckle. The protein localises to the nucleus. Its subcellular location is the nucleoplasm. It localises to the cytoplasm. The enzyme catalyses S-ubiquitinyl-[E2 ubiquitin-conjugating enzyme]-L-cysteine + [acceptor protein]-L-lysine = [E2 ubiquitin-conjugating enzyme]-L-cysteine + N(6)-ubiquitinyl-[acceptor protein]-L-lysine.. The protein operates within protein modification; protein ubiquitination. In terms of biological role, E3 ubiquitin-protein ligase that mediates ubiquitination of several tyrosine-phosphorylated Src substrates, including CDH1, CTTN and DOK1. Targets CDH1 for endocytosis and degradation. Associated component of the WMM complex, a complex that mediates N6-methyladenosine (m6A) methylation of RNAs, a modification that plays a role in the efficiency of mRNA splicing and RNA processing. Its function in the WMM complex is unknown. The sequence is that of E3 ubiquitin-protein ligase Hakai from Macaca fascicularis (Crab-eating macaque).